The sequence spans 158 residues: Ribosome maturation factor RimP (158 aa).

Belongs to the RimP family.

The protein resides in the cytoplasm. Required for maturation of 30S ribosomal subunits. The polypeptide is Ribosome maturation factor RimP (Deinococcus radiodurans (strain ATCC 13939 / DSM 20539 / JCM 16871 / CCUG 27074 / LMG 4051 / NBRC 15346 / NCIMB 9279 / VKM B-1422 / R1)).